Here is a 234-residue protein sequence, read N- to C-terminus: Small ribosomal subunit protein eS1y (234 aa).

Over residues 1-18 (MAVGKNKRISKGKKGGKK) the composition is skewed to basic residues. Residues 1 to 20 (MAVGKNKRISKGKKGGKKKA) are disordered.

This sequence belongs to the eukaryotic ribosomal protein eS1 family. Component of the small ribosomal subunit. Mature ribosomes consist of a small (40S) and a large (60S) subunit. The 40S subunit contains about 33 different proteins and 1 molecule of RNA (18S). The 60S subunit contains about 49 different proteins and 3 molecules of RNA (25S, 5.8S and 5S).

The protein resides in the cytoplasm. The sequence is that of Small ribosomal subunit protein eS1y from Vitis vinifera (Grape).